The primary structure comprises 374 residues: N-acetyldiaminopimelate deacetylase (374 aa).

Residue aspartate 69 is part of the active site. Glutamate 128 functions as the Proton acceptor in the catalytic mechanism.

It belongs to the peptidase M20A family. N-acetyldiaminopimelate deacetylase subfamily.

It catalyses the reaction N-acetyl-(2S,6S)-2,6-diaminopimelate + H2O = (2S,6S)-2,6-diaminopimelate + acetate. It functions in the pathway amino-acid biosynthesis; L-lysine biosynthesis via DAP pathway; LL-2,6-diaminopimelate from (S)-tetrahydrodipicolinate (acetylase route): step 3/3. Catalyzes the conversion of N-acetyl-diaminopimelate to diaminopimelate and acetate. The sequence is that of N-acetyldiaminopimelate deacetylase (ykuR) from Bacillus subtilis (strain 168).